Consider the following 150-residue polypeptide: Viral late gene transcription factor 2 (150 aa).

This sequence belongs to the orthopoxvirus VLTF-2/OPG126 family. In terms of assembly, interacts with itself. Interacts with the late transcription factors VLTF-1/OPG093.

Its function is as follows. Acts with RNA polymerase to initiate transcription from late gene promoters. The sequence is that of Viral late gene transcription factor 2 (OPG126) from Vaccinia virus (strain Western Reserve) (VACV).